Reading from the N-terminus, the 387-residue chain is WD repeat-containing protein 89 (387 aa).

WD repeat units lie at residues 21 to 65, 68 to 107, 112 to 156, 168 to 208, 214 to 254, and 319 to 358; these read KEPT…VLRE, GYPGLLNGVRFANSCDSVYSACTDGTVKCWDARVAREKPV, GYPS…QNLS, THSD…EEDA, NSIS…TDEP, and GHAATVRSFCWNVQDDSLLTGGEDAQLLLWKPGAIEKTFT.

The sequence is that of WD repeat-containing protein 89 (WDR89) from Homo sapiens (Human).